The sequence spans 204 residues: Urease accessory protein UreE (204 aa).

Basic and acidic residues predominate over residues 172 to 190; it reads HGHAHSHDHDHDHDHDHQH. Positions 172 to 204 are disordered; the sequence is HGHAHSHDHDHDHDHDHQHGPGCTHGHHGHDHH.

It belongs to the UreE family.

The protein resides in the cytoplasm. Involved in urease metallocenter assembly. Binds nickel. Probably functions as a nickel donor during metallocenter assembly. The polypeptide is Urease accessory protein UreE (Burkholderia orbicola (strain AU 1054)).